The sequence spans 145 residues: 3-hydroxyacyl-[acyl-carrier-protein] dehydratase FabZ (145 aa).

His-47 is a catalytic residue.

Belongs to the thioester dehydratase family. FabZ subfamily.

The protein resides in the cytoplasm. It carries out the reaction a (3R)-hydroxyacyl-[ACP] = a (2E)-enoyl-[ACP] + H2O. Its function is as follows. Involved in unsaturated fatty acids biosynthesis. Catalyzes the dehydration of short chain beta-hydroxyacyl-ACPs and long chain saturated and unsaturated beta-hydroxyacyl-ACPs. The chain is 3-hydroxyacyl-[acyl-carrier-protein] dehydratase FabZ from Thiobacillus denitrificans (strain ATCC 25259 / T1).